Consider the following 118-residue polypeptide: Thioredoxin H5 (118 aa).

A2 is subject to N-acetylalanine. In terms of domain architecture, Thioredoxin spans 2 to 113 (AGEGEVIACH…INEKLMKHGG (112 aa)). Catalysis depends on nucleophile residues C39 and C42. An intrachain disulfide couples C39 to C42.

This sequence belongs to the thioredoxin family. Plant H-type subfamily. In terms of assembly, interacts with MDH1.

It localises to the cytoplasm. Functionally, thiol-disulfide oxidoreductase involved in response to pathogens and oxidative stresses. Required for the response to victorin, a phytotoxin which induces programmed cell death in sensitive plants. Possesses insulin disulfide bonds reducing activity. The polypeptide is Thioredoxin H5 (TRX5) (Arabidopsis thaliana (Mouse-ear cress)).